A 190-amino-acid polypeptide reads, in one-letter code: MKRFMQIWKPAVVGFLLLTLVCGVIYPGVVTIIAGAAFQDKANGSIIEGKLADGETGKYGSTEIGQTFTQPEYLIGRAASDGAATNLNPTSEEQKQLVEKRITWWHKLDPANNRVIPMDLVTASASGVDPDISEAAAAYQVDRISRERGISTKVVKEIIAENTSKRLLGFWGEPTVNVLQVNVALDSLKM.

A helical transmembrane segment spans residues 13-33 (VGFLLLTLVCGVIYPGVVTII).

Belongs to the KdpC family. In terms of assembly, the system is composed of three essential subunits: KdpA, KdpB and KdpC.

It localises to the cell membrane. In terms of biological role, part of the high-affinity ATP-driven potassium transport (or Kdp) system, which catalyzes the hydrolysis of ATP coupled with the electrogenic transport of potassium into the cytoplasm. This subunit acts as a catalytic chaperone that increases the ATP-binding affinity of the ATP-hydrolyzing subunit KdpB by the formation of a transient KdpB/KdpC/ATP ternary complex. The sequence is that of Potassium-transporting ATPase KdpC subunit from Listeria innocua serovar 6a (strain ATCC BAA-680 / CLIP 11262).